We begin with the raw amino-acid sequence, 297 residues long: tRNA pseudouridine synthase B (297 aa).

The active-site Nucleophile is Asp-39.

This sequence belongs to the pseudouridine synthase TruB family. Type 1 subfamily.

The enzyme catalyses uridine(55) in tRNA = pseudouridine(55) in tRNA. Responsible for synthesis of pseudouridine from uracil-55 in the psi GC loop of transfer RNAs. This chain is tRNA pseudouridine synthase B, found in Lactobacillus acidophilus (strain ATCC 700396 / NCK56 / N2 / NCFM).